The sequence spans 204 residues: Urease accessory protein UreG (204 aa).

12–19 (GPVGSGKT) serves as a coordination point for GTP.

The protein belongs to the SIMIBI class G3E GTPase family. UreG subfamily. Homodimer. UreD, UreF and UreG form a complex that acts as a GTP-hydrolysis-dependent molecular chaperone, activating the urease apoprotein by helping to assemble the nickel containing metallocenter of UreC. The UreE protein probably delivers the nickel.

It is found in the cytoplasm. Facilitates the functional incorporation of the urease nickel metallocenter. This process requires GTP hydrolysis, probably effectuated by UreG. This Pseudomonas aeruginosa (strain LESB58) protein is Urease accessory protein UreG.